The following is a 232-amino-acid chain: Ubiquinone biosynthesis O-methyltransferase (232 aa).

S-adenosyl-L-methionine contacts are provided by Arg36, Gly55, Asp76, and Met120.

This sequence belongs to the methyltransferase superfamily. UbiG/COQ3 family.

The enzyme catalyses a 3-demethylubiquinol + S-adenosyl-L-methionine = a ubiquinol + S-adenosyl-L-homocysteine + H(+). It carries out the reaction a 3-(all-trans-polyprenyl)benzene-1,2-diol + S-adenosyl-L-methionine = a 2-methoxy-6-(all-trans-polyprenyl)phenol + S-adenosyl-L-homocysteine + H(+). It functions in the pathway cofactor biosynthesis; ubiquinone biosynthesis. Functionally, O-methyltransferase that catalyzes the 2 O-methylation steps in the ubiquinone biosynthetic pathway. This Paraburkholderia xenovorans (strain LB400) protein is Ubiquinone biosynthesis O-methyltransferase.